Consider the following 633-residue polypeptide: 1-deoxy-D-xylulose-5-phosphate synthase (633 aa).

The segment covering 1 to 12 (MSEPTANLQPAS) has biased composition (polar residues). Residues 1-21 (MSEPTANLQPASRTPLLDRVN) are disordered. Thiamine diphosphate-binding positions include H86 and 127–129 (GHA). D158 lines the Mg(2+) pocket. Thiamine diphosphate contacts are provided by residues 159 to 160 (GS), N187, and E377. A Mg(2+)-binding site is contributed by N187.

Belongs to the transketolase family. DXPS subfamily. In terms of assembly, homodimer. The cofactor is Mg(2+). Requires thiamine diphosphate as cofactor.

It carries out the reaction D-glyceraldehyde 3-phosphate + pyruvate + H(+) = 1-deoxy-D-xylulose 5-phosphate + CO2. It participates in metabolic intermediate biosynthesis; 1-deoxy-D-xylulose 5-phosphate biosynthesis; 1-deoxy-D-xylulose 5-phosphate from D-glyceraldehyde 3-phosphate and pyruvate: step 1/1. In terms of biological role, catalyzes the acyloin condensation reaction between C atoms 2 and 3 of pyruvate and glyceraldehyde 3-phosphate to yield 1-deoxy-D-xylulose-5-phosphate (DXP). This is 1-deoxy-D-xylulose-5-phosphate synthase from Deinococcus geothermalis (strain DSM 11300 / CIP 105573 / AG-3a).